The primary structure comprises 46 residues: Protein krueppel (46 aa).

C2H2-type zinc fingers lie at residues 1–4 (MRLH), 10–32 (YHCTHCERQFVQVANLRRHLRVH), and 38–46 (YACELCTSK).

The protein belongs to the krueppel C2H2-type zinc-finger protein family.

The protein localises to the nucleus. Functionally, krueppel is a gap class segmentation protein. The protein is Protein krueppel (Kr) of Lithobius forficatus (Centipede).